A 270-amino-acid polypeptide reads, in one-letter code: 4-hydroxy-tetrahydrodipicolinate reductase (270 aa).

Residues Gly8–Met13 and Glu34 contribute to the NAD(+) site. NADP(+) is bound at residue Arg35. Residues Gly98–Thr100 and Ser122–Met125 each bind NAD(+). The Proton donor/acceptor role is filled by His155. His156 serves as a coordination point for (S)-2,3,4,5-tetrahydrodipicolinate. The active-site Proton donor is Lys159. Gly165–Thr166 serves as a coordination point for (S)-2,3,4,5-tetrahydrodipicolinate.

This sequence belongs to the DapB family.

Its subcellular location is the cytoplasm. It catalyses the reaction (S)-2,3,4,5-tetrahydrodipicolinate + NAD(+) + H2O = (2S,4S)-4-hydroxy-2,3,4,5-tetrahydrodipicolinate + NADH + H(+). The catalysed reaction is (S)-2,3,4,5-tetrahydrodipicolinate + NADP(+) + H2O = (2S,4S)-4-hydroxy-2,3,4,5-tetrahydrodipicolinate + NADPH + H(+). It functions in the pathway amino-acid biosynthesis; L-lysine biosynthesis via DAP pathway; (S)-tetrahydrodipicolinate from L-aspartate: step 4/4. Functionally, catalyzes the conversion of 4-hydroxy-tetrahydrodipicolinate (HTPA) to tetrahydrodipicolinate. The chain is 4-hydroxy-tetrahydrodipicolinate reductase from Anaeromyxobacter dehalogenans (strain 2CP-C).